The following is an 834-amino-acid chain: Glycerol-3-phosphate acyltransferase (834 aa).

The HXXXXD motif signature appears at 309–314 (CHRSHI).

Belongs to the GPAT/DAPAT family.

The protein resides in the cell inner membrane. The catalysed reaction is sn-glycerol 3-phosphate + an acyl-CoA = a 1-acyl-sn-glycero-3-phosphate + CoA. The protein operates within phospholipid metabolism; CDP-diacylglycerol biosynthesis; CDP-diacylglycerol from sn-glycerol 3-phosphate: step 1/3. This chain is Glycerol-3-phosphate acyltransferase, found in Pseudomonas aeruginosa (strain UCBPP-PA14).